A 120-amino-acid polypeptide reads, in one-letter code: Spermidine export protein MdtJ (120 aa).

Helical transmembrane passes span 1–21 (MFYWILLALAIIAEITGTLSM), 31–51 (TGFILMLAMIALSYIFLAFAV), 54–74 (IALGVAYALWEGIGILLITLF), and 81–101 (ESLSLLKIAGLTTLVIGIVLI).

Belongs to the drug/metabolite transporter (DMT) superfamily. Small multidrug resistance (SMR) (TC 2.A.7.1) family. MdtJ subfamily. In terms of assembly, forms a complex with MdtI.

Its subcellular location is the cell inner membrane. Catalyzes the excretion of spermidine. In Klebsiella pneumoniae subsp. pneumoniae (strain ATCC 700721 / MGH 78578), this protein is Spermidine export protein MdtJ.